Consider the following 325-residue polypeptide: Zinc metalloproteinase/disintegrin (325 aa).

A propeptide spanning residues 1 to 39 (KYENVEKGDEAPKKCGVTHTNLESDEPIEKASQLFGTSE) is cleaved from the precursor. Glutamine 40 is subject to Pyrrolidone carboxylic acid. The region spanning 46 to 242 (RHIELVIVAD…HNPQRILNEP (197 aa)) is the Peptidase M12B domain. Histidine 182 lines the Zn(2+) pocket. Glutamate 183 is an active-site residue. Zn(2+)-binding residues include histidine 186 and histidine 192. Disulfide bonds link cysteine 197/cysteine 221 and cysteine 199/cysteine 204. Positions 243-257 (LRTDTVSTPVYGNVL) are excised as a propeptide. Residues 250–322 (TPVYGNVLQN…SECESNPWNF (73 aa)) enclose the Disintegrin domain. Position 258 is a pyrrolidone carboxylic acid (glutamine 258). Cystine bridges form between cysteine 264–cysteine 287, cysteine 278–cysteine 284, cysteine 283–cysteine 308, and cysteine 296–cysteine 315. The Cell attachment site signature appears at 300 to 302 (RGD).

Belongs to the venom metalloproteinase (M12B) family. P-II subfamily. P-IIe sub-subfamily. In terms of assembly, heterodimer of bitisgabonin and gabonin-1 (bitisgabonin-1) or gabonin-2 (bitisgabonin-2); disulfide-linked. Zn(2+) serves as cofactor. Expressed by the venom gland.

The protein localises to the secreted. Impairs hemostasis in the envenomed animal. Its function is as follows. In dimer with gabonin-1 (bitisgabonin-1), is a potent inhibitor of the adhesion of the RGD-dependent integrin alpha-5/beta-1 (ITGA5/ITGB1) to immobilized fibronectin. In terms of biological role, in dimer with gabonin-2 (bitisgabonin-2), preferentially inhibits the adhesion of the alpha-4/beta-1 (ITGA4/ITGB1) and alpha-9/beta-1 (ITGA9/ITGB1) integrins to VCAM-1 and also acts as a strong antagonist of alpha-5/beta-1 (ITGA5/ITGB1). This is Zinc metalloproteinase/disintegrin from Bitis gabonica (Gaboon adder).